A 623-amino-acid chain; its full sequence is Heterogeneous nuclear ribonucleoprotein L (623 aa).

The segment covering 1-16 has biased composition (basic residues); sequence MSRRLLPRAEKRRRRL. Positions 1–97 are disordered; sequence MSRRLLPRAE…NYDDPHKTPA (97 aa). Positions 17 to 27 are enriched in basic and acidic residues; it reads EQRQQPDEQLR. The span at 28–37 shows a compositional bias: low complexity; the sequence is RAGAMVKMAA. The span at 38 to 54 shows a compositional bias: gly residues; sequence AGGGGGGGRYYGGGNEG. Glycyl lysine isopeptide (Lys-Gly) (interchain with G-Cter in SUMO2) cross-links involve residues Lys59 and Lys62. Over residues 69 to 87 the composition is skewed to gly residues; that stretch reads QHGGGGGGGSGAAGGGGGE. Residue Ser98 is modified to Phosphoserine. The RRM 1 domain maps to 99-173; that stretch reads PVVHIRGLID…HPAFVNYSTS (75 aa). Lys133 participates in a covalent cross-link: Glycyl lysine isopeptide (Lys-Gly) (interchain with G-Cter in SUMO2). Ser182 bears the Phosphoserine mark. In terms of domain architecture, RRM 2 spans 190–267; sequence SVLLFTILNP…CTLKIEYAKP (78 aa). Lys266 is modified (N6-acetyllysine). The span at 281-298 shows a compositional bias: polar residues; sequence DYTNPNLSGQGDPGSNPN. Residues 281 to 413 form a disordered region; it reads DYTNPNLSGQ…PPPPDYGPHA (133 aa). Phosphoserine is present on residues Ser288 and Ser295. A Glycyl lysine isopeptide (Lys-Gly) (interchain with G-Cter in SUMO2) cross-link involves residue Lys299. 2 positions are modified to asymmetric dimethylarginine: Arg388 and Arg392. Residues 398-409 are compositionally biased toward pro residues; the sequence is GHPPPPPPPPDY. Ser415 carries the post-translational modification Phosphoserine. 2 consecutive RRM domains span residues 416–490 and 498–586; these read PVLM…VSKQ and SYGL…WDSK. Ser578 is modified (phosphoserine; by CaMK4). Residue Lys602 forms a Glycyl lysine isopeptide (Lys-Gly) (interchain with G-Cter in SUMO2) linkage.

As to quaternary structure, identified in a IGF2BP1-dependent mRNP granule complex containing untranslated mRNAs. Interacts with HNRNPLL. Interacts with APEX1; the interaction is DNA-dependent. Component of a complex with SETD2. Interacts with ELAVL1. Part of a transcription inhibitory ribonucleoprotein complex composed at least of the circular RNA circZNF827, ZNF827 and HNRNPK. Interacts with CHD8 in an RNA-dependent manner. Several isoelectric forms of the L protein are probably the results of post-translational modifications. Post-translationally, phosphorylation at Ser-578 by CaMK4 enhances interaction with a CaMK4-responsive RNA element (CaRRE1), and prevents inclusion of the stress axis-regulated exon (STREX) of the KCNMA1 potassium channel transcripts upon membrane depolarization.

It is found in the nucleus. The protein localises to the nucleoplasm. The protein resides in the cytoplasm. Functionally, splicing factor binding to exonic or intronic sites and acting as either an activator or repressor of exon inclusion. Exhibits a binding preference for CA-rich elements. Component of the heterogeneous nuclear ribonucleoprotein (hnRNP) complexes and associated with most nascent transcripts. Associates, together with APEX1, to the negative calcium responsive element (nCaRE) B2 of the APEX2 promoter. As part of a ribonucleoprotein complex composed at least of ZNF827, HNRNPK and the circular RNA circZNF827 that nucleates the complex on chromatin, may negatively regulate the transcription of genes involved in neuronal differentiation. Regulates alternative splicing of a core group of genes involved in neuronal differentiation, likely by mediating H3K36me3-coupled transcription elongation and co-transcriptional RNA processing via interaction with CHD8. This chain is Heterogeneous nuclear ribonucleoprotein L, found in Rattus norvegicus (Rat).